A 91-amino-acid chain; its full sequence is Large ribosomal subunit protein bL27 (91 aa).

Positions 1–25 (MAHKKGAASSNNGRDSESKRLGVKR) are disordered.

This sequence belongs to the bacterial ribosomal protein bL27 family.

The polypeptide is Large ribosomal subunit protein bL27 (Corynebacterium kroppenstedtii (strain DSM 44385 / JCM 11950 / CIP 105744 / CCUG 35717)).